Here is a 925-residue protein sequence, read N- to C-terminus: Protein PDC2 (925 aa).

An HTH CENPB-type domain is found at 63-138; sequence DANRLRKPNN…LSKMDVNISV (76 aa). Disordered stretches follow at residues 510–596, 674–693, and 904–925; these read DNNQ…RNSS, NEKAASDQNKSTDELPSSTA, and PTGGSNLPDSNNLHLPGNTGFF. Positions 513–537 are enriched in polar residues; it reads QNHLSMSQASHNPDYNSNHSNNAIE. Residues 538 to 563 are compositionally biased toward low complexity; it reads NTNNRGSNNNNNNNGSSNNINDNDSS. Positions 565-596 are enriched in polar residues; it reads KYLQQNTVDNSTKTGNPGQPNISSMESQRNSS. Residues 674–686 are compositionally biased toward basic and acidic residues; that stretch reads NEKAASDQNKSTD. Residues 904–916 show a composition bias toward polar residues; the sequence is PTGGSNLPDSNNL.

In terms of biological role, essential for the synthesis of pyruvate decarboxylase. May be important for a high basal level of PDC gene expression or play a positive role in the autoregulation control of PDC1 and PDC5. This Saccharomyces cerevisiae (strain ATCC 204508 / S288c) (Baker's yeast) protein is Protein PDC2 (PDC2).